A 324-amino-acid chain; its full sequence is NAC domain-containing protein 30 (324 aa).

The NAC domain occupies 9-158 (MPPGFRFHPT…GWVVCRAFRK (150 aa)). A DNA-binding region spans residues 109–164 (IGMRKTLVYYKGRAPNGRKSDWIMHEYRLQNSELAPVQEEGWVVCRAFRKPIPNQR). The segment covering 232-244 (LPQLDSPSLSPSL) has biased composition (low complexity). The interval 232–259 (LPQLDSPSLSPSLGTNKDQNESFEQEEE) is disordered.

Belongs to the plant vascular related NAC-domain protein family. As to quaternary structure, forms homodimer and heterodimers with other VND proteins (e.g. NAC037/VND1, NAC076/VND2 and NAC105/VND3) via their N-termini. Interacts with NAC083/VNI2. Expressed in developing protoxylems in roots and shoots. Detected in root protoxylem poles and in vessels of protoxylems, outermost metaxylems, inner metaxylems, shoots and hypocotyls. Expressed in roots, hypocotyls, cotyledons and leaves. Accumulates in the xylem but not in interfascicular fibers or pith cells in inflorescence stems. Present in developing vessels of the secondary xylem in roots undergoing secondary growth.

The protein resides in the nucleus. In terms of biological role, transcription activator that binds to the secondary wall NAC binding element (SNBE), 5'-(T/A)NN(C/T)(T/C/G)TNNNNNNNA(A/C)GN(A/C/T)(A/T)-3', in the promoter of target genes (e.g. genes involved in secondary wall biosynthesis, cell wall modification such as xylan accumulation, and programmed cell death). Involved in xylem formation in roots and shoots, especially regulating protoxylem vessel differentiation by promoting immature xylem vessel-specific genes expression. Can activate the expression of several genes including XCP1, MYB46, NAC010/SND3, MYB103, MYB58, MYB63, MYB83, KNAT7, ASL19 and ASL20. Its function is as follows. Required for the soilborne fungal pathogen Verticillium longisporum-induced transdifferentiation of chloroplast-containing bundle sheath cells to functional xylem elements leading to stunted growth, vein clearing, and leaf chloroses, as well as xylem hyperplasia within the vasculature of leaves, hypocotyls, and roots due to reinitiation of cambial activity and transdifferentiation of xylem parenchyma cells. This developmental reprogramming also mediates an increased drought stress tolerance. The polypeptide is NAC domain-containing protein 30 (Arabidopsis thaliana (Mouse-ear cress)).